Here is a 218-residue protein sequence, read N- to C-terminus: MMP 1-O-methyltransferase (218 aa).

Residues Phe-20, Gly-46, Ser-52, Asp-71, Gly-75, and Ser-124 each contribute to the S-adenosyl-L-methionine site. Asp-141 is a binding site for Mg(2+). The active-site Proton acceptor is His-144. Arg-151 lines the S-adenosyl-L-methionine pocket. Mg(2+)-binding residues include His-169 and Asp-170.

The protein belongs to the methyltransferase superfamily. Homodimer. It depends on Mg(2+) as a cofactor.

The catalysed reaction is 3,3'-di-O-methyl-4alpha-mannobiose + S-adenosyl-L-methionine = 1,3,3'-tri-O-methyl-4alpha-mannobiose + S-adenosyl-L-homocysteine + H(+). With respect to regulation, inhibited by EDTA. In terms of biological role, involved in the biosynthesis of 3-O-methylmannose polysaccharides (MMP), which are intracellular polymethylated polysaccharides implicated in the modulation of fatty acid metabolism in non-tuberculous mycobacteria. Specifically methylates the 1-OH position of 3,3'-di-O-methyl-4alpha-mannobiose, a probable early precursor of MMP, yielding the reducing end dimannoside of MMP. The sequence is that of MMP 1-O-methyltransferase from Mycolicibacterium hassiacum (strain DSM 44199 / CIP 105218 / JCM 12690 / 3849) (Mycobacterium hassiacum).